We begin with the raw amino-acid sequence, 403 residues long: MSDIKKVVLAYSGGLDTSVIVRWLQDTYNCEVVTFTADIGQGEEVEPARAKAEALGVKEIYIEDLREEFVRDYVFPMFRANTIYEGEYLLGTSIARPLIAKRLIDIANETGADAISHGATGKGNDQVRFELGAYALKPGVKVIAPWREWDLNSREKLLKYCEERNIPVEMKKGKSPYSMDANLLHISYEGINLEDPWAEAEEDMWRWSVSPEAAPDKPTYVELTYRKGDIVAVDGQEMKPHVVLETLNKLAGENGIGRLDIVENRYVGMKSRGCYETPGGTIMLRAHRAIESITLDREVAHLKDSLMPRYAEVIYNGYWWSPEREALQALIDQTQNYVNGTVRLKLYKGNVDVVGRKSDDSLFDEKIATFEEDQGAYDQKDAEGFIKLNALRLRIAAGKGRKL.

ATP is bound by residues 10–18 (AYSGGLDTS) and Ala37. Residues Tyr88 and Ser93 each coordinate L-citrulline. ATP is bound at residue Gly118. Positions 120, 124, and 125 each coordinate L-aspartate. Asn124 lines the L-citrulline pocket. The L-citrulline site is built by Arg128, Ser178, Ser187, Glu263, and Tyr275.

Belongs to the argininosuccinate synthase family. Type 1 subfamily. In terms of assembly, homotetramer.

The protein localises to the cytoplasm. It carries out the reaction L-citrulline + L-aspartate + ATP = 2-(N(omega)-L-arginino)succinate + AMP + diphosphate + H(+). It functions in the pathway amino-acid biosynthesis; L-arginine biosynthesis; L-arginine from L-ornithine and carbamoyl phosphate: step 2/3. The polypeptide is Argininosuccinate synthase (Marinobacter nauticus (strain ATCC 700491 / DSM 11845 / VT8) (Marinobacter aquaeolei)).